Reading from the N-terminus, the 361-residue chain is PTI1-like tyrosine-protein kinase At3g15890 (361 aa).

In terms of domain architecture, Protein kinase spans phenylalanine 39–phenylalanine 328. Residues leucine 45–valine 53 and lysine 67 contribute to the ATP site. Aspartate 165 acts as the Proton acceptor in catalysis. Disordered regions lie at residues threonine 195–glutamate 219 and glutamate 323–glutamate 361. A compositionally biased stretch (basic and acidic residues) spans leucine 351 to glutamate 361.

This sequence belongs to the protein kinase superfamily. Tyr protein kinase family.

It carries out the reaction L-tyrosyl-[protein] + ATP = O-phospho-L-tyrosyl-[protein] + ADP + H(+). In Arabidopsis thaliana (Mouse-ear cress), this protein is PTI1-like tyrosine-protein kinase At3g15890.